Here is a 144-residue protein sequence, read N- to C-terminus: Superoxide dismutase [Mn], mitochondrial (144 aa).

The Mn(2+) site is built by His-10, His-58, and Asp-143.

It belongs to the iron/manganese superoxide dismutase family. In terms of assembly, homotetramer. Mn(2+) is required as a cofactor.

It is found in the mitochondrion matrix. The enzyme catalyses 2 superoxide + 2 H(+) = H2O2 + O2. Destroys superoxide anion radicals which are normally produced within the cells and which are toxic to biological systems. The sequence is that of Superoxide dismutase [Mn], mitochondrial from Palinurus vulgaris (European spiny lobster).